The primary structure comprises 286 residues: MRYIRLCIISLLATLPLAVHASPQPLEQIKQSESQLSGSVGMIEMDLASGRTLTAWRADERFPMMSTFKVVLCGAVLARVDAGDEQLERKIHYRQQDLVDYSPVSEKHLADGMTVGELCAAAITMSDNSAANLLLATVGGPAGLTAFLRQIGDNVTRLDRWETELNEALPGDARDTTTPASMAATLRKLLTSQRLSARSQRQLLQWMVDDRVAGPLIRSVLPAGWFIADKTGAAERGARGIVALLGPNNKAERIVVIYLRDTPASMAERNQQIAGIGAALIEHWQR.

Positions 1 to 21 (MRYIRLCIISLLATLPLAVHA) are cleaved as a signal peptide. Serine 66 functions as the Acyl-ester intermediate in the catalytic mechanism. A disulfide bridge links cysteine 73 with cysteine 119. The active-site Proton acceptor is glutamate 164. Position 230–232 (230–232 (KTG)) interacts with substrate.

The protein belongs to the class-A beta-lactamase family.

The catalysed reaction is a beta-lactam + H2O = a substituted beta-amino acid. The chain is Beta-lactamase SHV-29 (bla) from Klebsiella pneumoniae.